The following is a 361-amino-acid chain: Single-stranded DNA-binding protein 3 (361 aa).

Met-1 is modified (N-acetylmethionine). The region spanning 16–48 is the LisH domain; the sequence is AREKLALYVYEYLLHVGAQKSAQTFLSEIRWEK. Arg-128, Arg-134, and Arg-138 each carry asymmetric dimethylarginine. Disordered regions lie at residues 140-166 and 184-361; these read GNQP…QQGH and PMGP…TMSV. A compositionally biased stretch (low complexity) spans 223 to 241; the sequence is PNSANSIPYSSSSPGTYVG. Residues 245 to 255 are compositionally biased toward pro residues; that stretch reads GGGPPGTPIMP. Residues 258–269 are compositionally biased toward polar residues; sequence ADSTNSSDNIYT. Over residues 288-298 the composition is skewed to gly residues; that stretch reads GSDGPMGGMGG. Positions 319-330 are enriched in low complexity; the sequence is NSPNNISGISNP. Ser-320, Ser-325, and Ser-328 each carry phosphoserine. Phosphothreonine is present on Thr-333. Over residues 346-361 the composition is skewed to polar residues; that stretch reads HSFQNDNYSPSMTMSV. Ser-354 and Ser-360 each carry phosphoserine.

The protein localises to the nucleus. Its function is as follows. May be involved in transcription regulation of the alpha 2(I) collagen gene where it binds to the single-stranded polypyrimidine sequences in the promoter region. This chain is Single-stranded DNA-binding protein 3 (Ssbp3), found in Rattus norvegicus (Rat).